A 259-amino-acid polypeptide reads, in one-letter code: Adenosylcobinamide-GDP ribazoletransferase (259 aa).

The next 6 helical transmembrane spans lie at 9–29 (NLFFIAMGFFTRIPMPKWIEV), 43–63 (LVGLLVGAISALVYTLMLYWV), 64–84 (SPSIAIVLAMITSVLVTGGFH), 118–138 (ALALVLALLLKWQLLTELALF), 143–163 (VSLALIVGHCLSRVVAASFIF), and 190–210 (ILLATGILALLLVGVMQALVL).

Belongs to the CobS family. Mg(2+) is required as a cofactor.

Its subcellular location is the cell inner membrane. It catalyses the reaction alpha-ribazole + adenosylcob(III)inamide-GDP = adenosylcob(III)alamin + GMP + H(+). The enzyme catalyses alpha-ribazole 5'-phosphate + adenosylcob(III)inamide-GDP = adenosylcob(III)alamin 5'-phosphate + GMP + H(+). The protein operates within cofactor biosynthesis; adenosylcobalamin biosynthesis; adenosylcobalamin from cob(II)yrinate a,c-diamide: step 7/7. Functionally, joins adenosylcobinamide-GDP and alpha-ribazole to generate adenosylcobalamin (Ado-cobalamin). Also synthesizes adenosylcobalamin 5'-phosphate from adenosylcobinamide-GDP and alpha-ribazole 5'-phosphate. The sequence is that of Adenosylcobinamide-GDP ribazoletransferase from Shewanella pealeana (strain ATCC 700345 / ANG-SQ1).